We begin with the raw amino-acid sequence, 331 residues long: Ferredoxin--NADP reductase (331 aa).

FAD is bound by residues Glu-38, Gln-46, Tyr-51, Ala-91, Leu-125, Asp-282, and Ser-323.

This sequence belongs to the ferredoxin--NADP reductase type 2 family. In terms of assembly, homodimer. Requires FAD as cofactor.

The catalysed reaction is 2 reduced [2Fe-2S]-[ferredoxin] + NADP(+) + H(+) = 2 oxidized [2Fe-2S]-[ferredoxin] + NADPH. This Deinococcus geothermalis (strain DSM 11300 / CIP 105573 / AG-3a) protein is Ferredoxin--NADP reductase.